Here is a 132-residue protein sequence, read N- to C-terminus: D-ribose pyranase (132 aa).

The active-site Proton donor is the H20. Substrate-binding positions include D28, H99, and 121–123 (YAN).

Belongs to the RbsD / FucU family. RbsD subfamily. In terms of assembly, homodecamer.

It is found in the cytoplasm. It carries out the reaction beta-D-ribopyranose = beta-D-ribofuranose. The protein operates within carbohydrate metabolism; D-ribose degradation; D-ribose 5-phosphate from beta-D-ribopyranose: step 1/2. Its function is as follows. Catalyzes the interconversion of beta-pyran and beta-furan forms of D-ribose. The protein is D-ribose pyranase of Variovorax paradoxus (strain S110).